We begin with the raw amino-acid sequence, 473 residues long: MKILYSLRRFYHVETLFNGTFVLAGRDQETTGFAWWAGNARLINLSGKLLGAHVAHAGLIVFWAGAMNLFEVAHFVPEKPMYEQGLILLPHLATLGWGVGPGGEVLDTFPYFVSGVLHLISSAVLGFGGIYHALLGPETLEESFPFFGYVWKDRNKMTTILGIHLILLGLGAFLLVLKALYFGGVYDTWAPGGGDVRKITNLTLSPSVIFGYLLKSPFGGEGWIVSVDDLEDIIGGHVWLGFICVFGGIWHILTKPFAWARRAFVWSGEAYLSYSLAALSVFGFIACCFVWFNNTAYSSEFYGPTGPEASQAQAFTFLVRDQRLGANVGSAQGPTGLGKYLMRSPTGEVIFGGETMRFWDLRAPWLEPLRGPNGLDLSRLKKDIQPWQERRSAEYMTHAPLGSLNSVGGVATEINAVNYVSPRSWLSTSHFVLGFFPFVGHLWHAGRARAAAAGFEKGIDRDLEPVLYMNPLN.

Positions 1–14 are excised as a propeptide; sequence MKILYSLRRFYHVE. N-acetylthreonine is present on Thr-15. Thr-15 bears the Phosphothreonine mark. Transmembrane regions (helical) follow at residues 69–93, 134–155, 178–200, 255–275, and 291–312; these read LFEVAHFVPEKPMYEQGLILLPHLA, LLGPETLEESFPFFGYVWKDRN, KALYFGGVYDTWAPGGGDVRKIT, KPFAWARRAFVWSGEAYLSYS, and WFNNTAYSSEFYGPTGPEASQA. Glu-367 is a [CaMn4O5] cluster binding site. Residues 447–471 form a helical membrane-spanning segment; it reads RARAAAAGFEKGIDRDLEPVLYMNP.

Belongs to the PsbB/PsbC family. PsbC subfamily. PSII is composed of 1 copy each of membrane proteins PsbA, PsbB, PsbC, PsbD, PsbE, PsbF, PsbH, PsbI, PsbJ, PsbK, PsbL, PsbM, PsbT, PsbX, PsbY, PsbZ, Psb30/Ycf12, at least 3 peripheral proteins of the oxygen-evolving complex and a large number of cofactors. It forms dimeric complexes. Binds multiple chlorophylls and provides some of the ligands for the Ca-4Mn-5O cluster of the oxygen-evolving complex. It may also provide a ligand for a Cl- that is required for oxygen evolution. PSII binds additional chlorophylls, carotenoids and specific lipids. is required as a cofactor. Post-translationally, phosphorylated on threonine residue(s); phosphorylation increases with increasing light levels.

The protein localises to the plastid. Its subcellular location is the chloroplast thylakoid membrane. In terms of biological role, one of the components of the core complex of photosystem II (PSII). It binds chlorophyll and helps catalyze the primary light-induced photochemical processes of PSII. PSII is a light-driven water:plastoquinone oxidoreductase, using light energy to abstract electrons from H(2)O, generating O(2) and a proton gradient subsequently used for ATP formation. This chain is Photosystem II CP43 reaction center protein, found in Secale cereale (Rye).